A 249-amino-acid polypeptide reads, in one-letter code: Leucyl/phenylalanyl-tRNA--protein transferase (249 aa).

This sequence belongs to the L/F-transferase family.

The protein resides in the cytoplasm. The enzyme catalyses N-terminal L-lysyl-[protein] + L-leucyl-tRNA(Leu) = N-terminal L-leucyl-L-lysyl-[protein] + tRNA(Leu) + H(+). It catalyses the reaction N-terminal L-arginyl-[protein] + L-leucyl-tRNA(Leu) = N-terminal L-leucyl-L-arginyl-[protein] + tRNA(Leu) + H(+). It carries out the reaction L-phenylalanyl-tRNA(Phe) + an N-terminal L-alpha-aminoacyl-[protein] = an N-terminal L-phenylalanyl-L-alpha-aminoacyl-[protein] + tRNA(Phe). In terms of biological role, functions in the N-end rule pathway of protein degradation where it conjugates Leu, Phe and, less efficiently, Met from aminoacyl-tRNAs to the N-termini of proteins containing an N-terminal arginine or lysine. In Cupriavidus metallidurans (strain ATCC 43123 / DSM 2839 / NBRC 102507 / CH34) (Ralstonia metallidurans), this protein is Leucyl/phenylalanyl-tRNA--protein transferase.